The sequence spans 122 residues: Large ribosomal subunit protein bL12 (122 aa).

Belongs to the bacterial ribosomal protein bL12 family. In terms of assembly, homodimer. Part of the ribosomal stalk of the 50S ribosomal subunit. Forms a multimeric L10(L12)X complex, where L10 forms an elongated spine to which 2 to 4 L12 dimers bind in a sequential fashion. Binds GTP-bound translation factors.

In terms of biological role, forms part of the ribosomal stalk which helps the ribosome interact with GTP-bound translation factors. Is thus essential for accurate translation. This is Large ribosomal subunit protein bL12 from Deinococcus geothermalis (strain DSM 11300 / CIP 105573 / AG-3a).